The primary structure comprises 479 residues: MNYQAVIGLEVHVQLKTDTKIFCGCSTTFGASPNSQTCPVCLGMPGVLPVLNKKVVEFAIRAGLATNCRIAPRSVFARKNYFYPDLPKGYQISQYELPICQNGHLDIEVDGQVKRIGITRIHMEEDAGKLVHADVPGLGSGSGVDLNRACTPLLEIVSEPDIRSADEAVAYLRKLHQIVVYLGICDGNMEEGSFRCDANVSVMPVGSTTFGTRTETKNVNSFRFVKQAIEHEIERQIELIEEGGKVVQETRLFDPNTGETRSMRGKEEAHDYRYFPDPDLVPLVISNDWVEDTRLSLPELPDARRSRYRSELGLSDYDAEVLTATREMAEYFENCLAAGAPAKGAANWVMGEVTRALNEAGKDIAECPVAPARLTALLQLIEKGTISGKIAKTVFDEMWQSDKAPEAIVEEKGLVQVSDTGAIEKIIDEIMAANMGQVEEFRGGKEKVFGFFVGQVMRASKGKANPAVVNELLMKKLKG.

It belongs to the GatB/GatE family. GatB subfamily. As to quaternary structure, heterotrimer of A, B and C subunits.

It catalyses the reaction L-glutamyl-tRNA(Gln) + L-glutamine + ATP + H2O = L-glutaminyl-tRNA(Gln) + L-glutamate + ADP + phosphate + H(+). The enzyme catalyses L-aspartyl-tRNA(Asn) + L-glutamine + ATP + H2O = L-asparaginyl-tRNA(Asn) + L-glutamate + ADP + phosphate + 2 H(+). Its function is as follows. Allows the formation of correctly charged Asn-tRNA(Asn) or Gln-tRNA(Gln) through the transamidation of misacylated Asp-tRNA(Asn) or Glu-tRNA(Gln) in organisms which lack either or both of asparaginyl-tRNA or glutaminyl-tRNA synthetases. The reaction takes place in the presence of glutamine and ATP through an activated phospho-Asp-tRNA(Asn) or phospho-Glu-tRNA(Gln). In Geobacter sulfurreducens (strain ATCC 51573 / DSM 12127 / PCA), this protein is Aspartyl/glutamyl-tRNA(Asn/Gln) amidotransferase subunit B.